A 454-amino-acid chain; its full sequence is uncharacterized protein (454 aa).

The segment at 422–454 (EWLPPAHLDHGQPRTNSYFHPEKLLHDSDEDDP) is disordered.

It belongs to the Rv1128c/1148c/1588c/1702c/1945/3466 family.

This is an uncharacterized protein from Mycobacterium tuberculosis (strain CDC 1551 / Oshkosh).